The chain runs to 142 residues: Large ribosomal subunit protein uL11 (142 aa).

It belongs to the universal ribosomal protein uL11 family. As to quaternary structure, part of the ribosomal stalk of the 50S ribosomal subunit. Interacts with L10 and the large rRNA to form the base of the stalk. L10 forms an elongated spine to which L12 dimers bind in a sequential fashion forming a multimeric L10(L12)X complex. Post-translationally, one or more lysine residues are methylated.

In terms of biological role, forms part of the ribosomal stalk which helps the ribosome interact with GTP-bound translation factors. The protein is Large ribosomal subunit protein uL11 of Vibrio cholerae serotype O1 (strain ATCC 39541 / Classical Ogawa 395 / O395).